Consider the following 69-residue polypeptide: MKPGIHPDYHVTQVTCTCGNSFVTRSTAPNGVIRAEICSSCHPFYTGKQKILDTGGRVARFEKRFGKRK.

Zn(2+) is bound by residues Cys16, Cys18, Cys38, and Cys41.

It belongs to the bacterial ribosomal protein bL31 family. Type A subfamily. In terms of assembly, part of the 50S ribosomal subunit. It depends on Zn(2+) as a cofactor.

In terms of biological role, binds the 23S rRNA. In Thermobifida fusca (strain YX), this protein is Large ribosomal subunit protein bL31.